Here is a 309-residue protein sequence, read N- to C-terminus: MISTERIQPNLVTVADMDAADAIDLIHEAQAYKAGKQAVLTAPAYAVNLFFENSTRTKTSFQMAQMKLGMNVLEFEAGTSSVKKGESLYDTVKTMESIGVNVAVIRHPENEYYNQLINHSDLKIGIVNGGDGSGQHPSQCLLDMMTINEEFGDFKGLKVLIIGDLSHSRVAHSNAMMLNRLGAEVYFAGPEKWYDPTLEQYGTFGDFDELLPQMDVVNLLRVQNERLTTADGQAFDANQYHQAYGLTLERAAKMKQGAIIMHPAPVNRGVEIDSSLVEAPNSRIFQQMTNGVYTRMAILSRVLRYQGLM.

The carbamoyl phosphate site is built by Arg-56 and Thr-57. Position 84 (Lys-84) interacts with L-aspartate. Carbamoyl phosphate contacts are provided by Arg-106, His-136, and Gln-139. 2 residues coordinate L-aspartate: Arg-169 and Arg-221. Ala-264 and Pro-265 together coordinate carbamoyl phosphate.

This sequence belongs to the aspartate/ornithine carbamoyltransferase superfamily. ATCase family. As to quaternary structure, heterododecamer (2C3:3R2) of six catalytic PyrB chains organized as two trimers (C3), and six regulatory PyrI chains organized as three dimers (R2).

It catalyses the reaction carbamoyl phosphate + L-aspartate = N-carbamoyl-L-aspartate + phosphate + H(+). It functions in the pathway pyrimidine metabolism; UMP biosynthesis via de novo pathway; (S)-dihydroorotate from bicarbonate: step 2/3. Its function is as follows. Catalyzes the condensation of carbamoyl phosphate and aspartate to form carbamoyl aspartate and inorganic phosphate, the committed step in the de novo pyrimidine nucleotide biosynthesis pathway. The sequence is that of Aspartate carbamoyltransferase catalytic subunit from Limosilactobacillus reuteri subsp. reuteri (strain JCM 1112) (Lactobacillus reuteri).